The following is a 270-amino-acid chain: uncharacterized protein (270 aa).

The region spanning 43-112 (CTANDIKRKY…REEYDRFGIH (70 aa)) is the J domain. The disordered stretch occupies residues 239–270 (EQSKQIPTQQKPSSLPPPERALPAPTMPTPSS). Residues 242–251 (KQIPTQQKPS) show a composition bias toward polar residues. The span at 252–270 (SLPPPERALPAPTMPTPSS) shows a compositional bias: pro residues.

This is an uncharacterized protein from Schizosaccharomyces pombe (strain 972 / ATCC 24843) (Fission yeast).